The chain runs to 417 residues: Gamma-glutamyl phosphate reductase (417 aa).

This sequence belongs to the gamma-glutamyl phosphate reductase family.

The protein localises to the cytoplasm. The enzyme catalyses L-glutamate 5-semialdehyde + phosphate + NADP(+) = L-glutamyl 5-phosphate + NADPH + H(+). Its pathway is amino-acid biosynthesis; L-proline biosynthesis; L-glutamate 5-semialdehyde from L-glutamate: step 2/2. Catalyzes the NADPH-dependent reduction of L-glutamate 5-phosphate into L-glutamate 5-semialdehyde and phosphate. The product spontaneously undergoes cyclization to form 1-pyrroline-5-carboxylate. This Enterobacter sp. (strain 638) protein is Gamma-glutamyl phosphate reductase.